Here is a 180-residue protein sequence, read N- to C-terminus: Nucleoside triphosphate/diphosphate phosphatase (180 aa).

R26 functions as the Proton donor in the catalytic mechanism. Residues N90, D106, D108, D110, D123, and E126 each coordinate Mg(2+).

It belongs to the Ntdp family. Mg(2+) serves as cofactor.

It carries out the reaction a ribonucleoside 5'-triphosphate + H2O = a ribonucleoside 5'-diphosphate + phosphate + H(+). The catalysed reaction is a ribonucleoside 5'-diphosphate + H2O = a ribonucleoside 5'-phosphate + phosphate + H(+). In terms of biological role, has nucleoside phosphatase activity towards nucleoside triphosphates and nucleoside diphosphates. The polypeptide is Nucleoside triphosphate/diphosphate phosphatase (Staphylococcus aureus (strain MRSA252)).